A 208-amino-acid polypeptide reads, in one-letter code: Major capsid protein (208 aa).

A compositionally biased stretch (low complexity) spans 1–16 (MSTVVVKGNVNGGVQQ). A disordered region spans residues 1–69 (MSTVVVKGNV…TGVPRGRGSS (69 aa)). Basic residues-rich tracts occupy residues 17–30 (PRRRRRQSLRRRAN) and 44–61 (PRRRRRRRGGNRRSRRTG).

This sequence belongs to the luteoviruses capsid protein family.

Its subcellular location is the virion. Functionally, major capsid protein that self-assembles to form an icosahedral capsid with a T=3 symmetry, about 23 nm in diameter, and consisting of 180 capsid proteins monomers. Most of the 180 monomers are the major capsid protein, but a small percentage contain the minor capsid protein, which has a long C-terminal extension. This Solanum tuberosum (Potato) protein is Major capsid protein.